The sequence spans 118 residues: Large ribosomal subunit protein uL24 (118 aa).

Belongs to the universal ribosomal protein uL24 family. In terms of assembly, part of the 50S ribosomal subunit.

Its function is as follows. One of two assembly initiator proteins, it binds directly to the 5'-end of the 23S rRNA, where it nucleates assembly of the 50S subunit. Functionally, one of the proteins that surrounds the polypeptide exit tunnel on the outside of the subunit. This chain is Large ribosomal subunit protein uL24, found in Prochlorococcus marinus (strain MIT 9215).